Here is a 176-residue protein sequence, read N- to C-terminus: Peptide deformylase 1 (176 aa).

2 residues coordinate Fe cation: Cys99 and His141. The active site involves Glu142. His145 contacts Fe cation.

This sequence belongs to the polypeptide deformylase family. Requires Fe(2+) as cofactor.

It catalyses the reaction N-terminal N-formyl-L-methionyl-[peptide] + H2O = N-terminal L-methionyl-[peptide] + formate. In terms of biological role, removes the formyl group from the N-terminal Met of newly synthesized proteins. Requires at least a dipeptide for an efficient rate of reaction. N-terminal L-methionine is a prerequisite for activity but the enzyme has broad specificity at other positions. This chain is Peptide deformylase 1, found in Nitrosomonas europaea (strain ATCC 19718 / CIP 103999 / KCTC 2705 / NBRC 14298).